The following is a 494-amino-acid chain: V-type proton ATPase subunit B (494 aa).

Arginine 384 contacts ATP.

Belongs to the ATPase alpha/beta chains family. V-ATPase is a heteromultimeric enzyme made up of two complexes: the ATP-hydrolytic V1 complex and the proton translocation V0 complex. The V1 complex consists of three catalytic AB heterodimers that form a heterohexamer, three peripheral stalks each consisting of EG heterodimers, one central rotor including subunits D and F, and the regulatory subunits C and H. The proton translocation complex V0 consists of the proton transport subunit a, a ring of proteolipid subunits c9c'', rotary subunit d, subunits e and f, and the accessory subunits VhaAC45 and ATP6AP2.

Functionally, non-catalytic subunit of the V1 complex of vacuolar(H+)-ATPase (V-ATPase), a multisubunit enzyme composed of a peripheral complex (V1) that hydrolyzes ATP and a membrane integral complex (V0) that translocates protons. V-ATPase is responsible for acidifying and maintaining the pH of intracellular compartments and in some cell types, is targeted to the plasma membrane, where it is responsible for acidifying the extracellular environment. Essential for the proper assembly and activity of V-ATPase. The sequence is that of V-type proton ATPase subunit B (VHA55) from Heliothis virescens (Tobacco budworm moth).